The following is a 255-amino-acid chain: Ribonuclease HII (255 aa).

The region spanning 72–255 is the RNase H type-2 domain; it reads AIICGIDEVG…KSFEPIKSLL (184 aa). Asp-78, Glu-79, and Asp-170 together coordinate a divalent metal cation.

Belongs to the RNase HII family. The cofactor is Mn(2+). Mg(2+) is required as a cofactor.

It localises to the cytoplasm. The catalysed reaction is Endonucleolytic cleavage to 5'-phosphomonoester.. In terms of biological role, endonuclease that specifically degrades the RNA of RNA-DNA hybrids. This chain is Ribonuclease HII, found in Staphylococcus aureus (strain Mu3 / ATCC 700698).